We begin with the raw amino-acid sequence, 424 residues long: Transcription regulator spe-44 (424 aa).

The 86-residue stretch at 65–150 (PLQITIPEGD…RTHMEAMTID (86 aa)) folds into the SAND domain. 2 disordered regions span residues 178–228 (ARKS…KPRQ) and 371–394 (EHSV…AREF). The span at 192-210 (YEIENEMAGKEADNDDNRK) shows a compositional bias: basic and acidic residues. Over residues 378 to 388 (PRTSSSSQESL) the composition is skewed to polar residues.

Its subcellular location is the chromosome. The protein resides in the nucleus. In terms of biological role, transcription factor which controls spermatogenesis and sperm cell fate by regulation of sperm gene expression. In Caenorhabditis elegans, this protein is Transcription regulator spe-44.